Consider the following 131-residue polypeptide: Snaclec bitiscetin subunit alpha (131 aa).

Intrachain disulfides connect cysteine 4–cysteine 15, cysteine 32–cysteine 125, and cysteine 100–cysteine 117. In terms of domain architecture, C-type lectin spans 11 to 126 (YKGHCYKVFK…CGEKNPFICK (116 aa)).

Belongs to the snaclec family. As to quaternary structure, heterodimer of subunits alpha and beta; disulfide-linked. Expressed by the venom gland.

It is found in the secreted. In terms of biological role, snaclec that binds to von Willebrand factor (VWF) and induces its interaction with GPIbalpha (GP1BA) (via the vWF A1 domain), resulting in platelet aggregation. The protein is Snaclec bitiscetin subunit alpha of Bitis arietans (African puff adder).